The following is a 124-amino-acid chain: TP53-target gene 3 protein (124 aa).

The span at 1 to 11 (MRASPCISQPA) shows a compositional bias: polar residues. The segment at 1-42 (MRASPCISQPAASWHPRPSALRPTAGSGPDTRTPGTVEDGSA) is disordered.

Strongly expressed in testis. Weakly expressed in heart, placenta and skeletal muscle.

The protein localises to the cytoplasm. The protein resides in the nucleus. Its function is as follows. May play a significant role in p53/TP53-mediating signaling pathway. The polypeptide is TP53-target gene 3 protein (Homo sapiens (Human)).